The primary structure comprises 1454 residues: Serine/threonine-protein kinase VPS15 (1454 aa).

Gly2 is lipidated: N-myristoyl glycine. The Protein kinase domain maps to 27-300 (VHYVSQLNSS…LLNKYRGIFF (274 aa)). ATP-binding positions include 33-41 (LNSSRFLKT) and Lys54. The active-site Proton acceptor is Asp147. HEAT repeat units follow at residues 460–497 (NKID…SVRK), 576–613 (KLIQ…FFGR), 615–652 (RTND…LLGT), and 654–691 (TLEQ…TGLI). WD repeat units follow at residues 1078–1118 (NEPN…VGEV), 1126–1165 (DCSS…QESE), 1229–1268 (PRHG…LIRS), 1275–1315 (APIT…CQYA), 1344–1382 (RSLN…SSKA), and 1422–1454 (YHHD…GIFQ).

Belongs to the protein kinase superfamily. Ser/Thr protein kinase family. As to quaternary structure, component of the autophagy-specific VPS34 PI3-kinase complex I composed of VPS15, VPS30, VPS34, ATG14 and ATG38; and of the VPS34 PI3-kinase complex II composed of VPS15, VPS30, VPS34 and VPS38. Interacts directly with ATG14 and GPA1. Interacts directly with VPS34. Post-translationally, autophosphorylated.

It is found in the golgi apparatus. The protein localises to the trans-Golgi network membrane. It localises to the endosome membrane. It catalyses the reaction L-seryl-[protein] + ATP = O-phospho-L-seryl-[protein] + ADP + H(+). The catalysed reaction is L-threonyl-[protein] + ATP = O-phospho-L-threonyl-[protein] + ADP + H(+). Serine/threonine-protein kinase required for cytoplasm to vacuole transport (Cvt) and autophagy as a part of the autophagy-specific VPS34 PI3-kinase complex I. This complex is essential to recruit the ATG8-phosphatidylinositol conjugate and the ATG12-ATG5 conjugate to the pre-autophagosomal structure. Is also involved in endosome-to-Golgi retrograde transport as part of the VPS34 PI3-kinase complex II. This second complex is required for the endosome-to-Golgi retrieval of PEP1 and KEX2, and the recruitment of VPS5 and VPS7, two components of the retromer complex, to endosomal membranes (probably through the synthesis of a specific pool of phosphatidylinositol 3-phosphate recruiting the retromer to the endosomes). By regulating VPS34 kinase activity, VPS15 appears to be essential for the efficient delivery of soluble hydrolases to the yeast vacuole. May function as a G protein beta subunit to propagate the pheromone response at the endosome with GPA1. In Saccharomyces cerevisiae (strain ATCC 204508 / S288c) (Baker's yeast), this protein is Serine/threonine-protein kinase VPS15.